The sequence spans 382 residues: Sulfate adenylyltransferase (382 aa).

It belongs to the sulfate adenylyltransferase family.

It carries out the reaction sulfate + ATP + H(+) = adenosine 5'-phosphosulfate + diphosphate. It functions in the pathway sulfur metabolism; hydrogen sulfide biosynthesis; sulfite from sulfate: step 1/3. The protein is Sulfate adenylyltransferase of Staphylothermus marinus (strain ATCC 43588 / DSM 3639 / JCM 9404 / F1).